Reading from the N-terminus, the 335-residue chain is Pro-cathepsin H (335 aa).

The N-terminal stretch at 1-22 (MWATLPLLCAGAWLLGVPVCGA) is a signal peptide. Positions 23–97 (AELCVNSLEK…AEIKHKYLWS (75 aa)) are cleaved as a propeptide — activation peptide. N-linked (GlcNAc...) asparagine glycosylation occurs at N101. Disulfide bonds link C102-C327, C138-C181, C172-C214, and C272-C322. A propeptide spanning residues 106–115 (KSNYLRGTGP) is cleaved from the precursor. C141 is a catalytic residue. N230 is a glycosylation site (N-linked (GlcNAc...) asparagine). Active-site residues include H281 and N301.

It belongs to the peptidase C1 family. In terms of assembly, composed of a mini chain and a large chain. The large chain may be split into heavy and light chain. All chains are held together by disulfide bonds.

The protein resides in the lysosome. It catalyses the reaction Hydrolysis of proteins, acting as an aminopeptidase (notably, cleaving Arg-|-Xaa bonds) as well as an endopeptidase.. In terms of biological role, important for the overall degradation of proteins in lysosomes. In Homo sapiens (Human), this protein is Pro-cathepsin H (CTSH).